Here is a 277-residue protein sequence, read N- to C-terminus: Elongation factor 1-delta (277 aa).

At alanine 2 the chain carries N-acetylalanine. An N6-acetyllysine modification is found at lysine 17. 5 positions are modified to phosphoserine: serine 37, serine 44, serine 60, serine 86, and serine 106. N6-acetyllysine is present on lysine 107. Residues 113 to 171 (SALEKSSPAHRATTPQTQHVSPMRQVEPPSRKAATATEDDEDDDIDLFGSDEEEDKEAA) are disordered. N6-acetyllysine; alternate is present on lysine 117. Lysine 117 bears the N6-succinyllysine; alternate mark. Serine 119 is modified (phosphoserine). Threonine 129 carries the phosphothreonine modification. Serine 133 carries the post-translational modification Phosphoserine. The residue at position 147 (threonine 147) is a Phosphothreonine. Over residues 149–168 (TEDDEDDDIDLFGSDEEEDK) the composition is skewed to acidic residues. Serine 162 bears the Phosphoserine; by CK2 mark.

Belongs to the EF-1-beta/EF-1-delta family. EF-1 is composed of 4 subunits: alpha, beta, delta, and gamma.

In terms of biological role, EF-1-beta and EF-1-delta stimulate the exchange of GDP bound to EF-1-alpha to GTP. This chain is Elongation factor 1-delta (EEF1D), found in Ovis aries (Sheep).